The chain runs to 809 residues: Protein TOC75, chloroplastic (809 aa).

The span at 1-17 (MRTSVIPNRLTPTLTTH) shows a compositional bias: polar residues. A chloroplast-targeting transit peptide spans 1 to 35 (MRTSVIPNRLTPTLTTHPSRRRNDHITTRTSSLKC). Residues 1-44 (MRTSVIPNRLTPTLTTHPSRRRNDHITTRTSSLKCHLSPSSGDN) form a disordered region. A chloroplast; outer membrane-targeting transit peptide spans 36–131 (HLSPSSGDNN…RILSPARAIA (96 aa)). Residues 132–143 (DEPKSEDWDSHE) are Chloroplast intermembrane-facing. A beta stranded membrane pass occupies residues 144-152 (LPADITVLL). The Cytoplasmic segment spans residues 153–160 (GRLSGFKK). A beta stranded transmembrane segment spans residues 161-169 (YKISDILFF). Over 170–225 (DRNKKSKVETQDSFLDMVSLKPGGVYTKAQLQKELESLATCGMFEKVDMEGKTNAD) the chain is Chloroplast intermembrane. The chain crosses the membrane as a beta stranded span at residues 226–234 (GSLGLTISF). The Cytoplasmic segment spans residues 235–247 (AESMWERADRFRC). Residues 248–254 (INVGLMG) traverse the membrane as a beta stranded segment. Residues 255 to 357 (QSKPVEMDPD…VVCEVVEGDI (103 aa)) are Chloroplast intermembrane-facing. A beta stranded transmembrane segment spans residues 358 to 365 (TKLSIQYL). Over 366-410 (DKLGNVVEGNTEGPVVQRELPKQLLPGHTFNIEAGKQALRNINSL) the chain is Cytoplasmic. A beta stranded transmembrane segment spans residues 411 to 418 (ALFSNIEV). Residues 419–427 (NPRPDEMNE) are Chloroplast intermembrane-facing. The beta stranded transmembrane segment at 428–436 (GSIIVEIKL) threads the bilayer. The Cytoplasmic segment spans residues 437-442 (KELEQK). Residues 443–452 (SAEVSTEWSI) form a beta stranded membrane-spanning segment. Topologically, residues 453–464 (VPGRGGRPTLAS) are chloroplast intermembrane. A beta stranded transmembrane segment spans residues 465–473 (LQPGGTITF). The Cytoplasmic segment spans residues 474-500 (EHRNLQGLNRSLTGSVTTSNFLNPQDD). The beta stranded transmembrane segment at 501 to 509 (LAFKMEYAH) threads the bilayer. Residues 510 to 553 (PYLDGVDNPRNRTLRVSCFNSRKLSPVFTGGPGVDEVPSIWVDR) lie on the Chloroplast intermembrane side of the membrane. Residues 554-561 (AGVKANIT) traverse the membrane as a beta stranded segment. The Cytoplasmic portion of the chain corresponds to 562–569 (ENFSRQSK). The chain crosses the membrane as a beta stranded span at residues 570–577 (FTYGLVME). Residues 578–684 (EIITRDESNH…VEEGAGKSPP (107 aa)) lie on the Chloroplast intermembrane side of the membrane. A beta stranded transmembrane segment spans residues 685–693 (PVLVLHGHY). At 694–705 (GGCVGDLPSYDA) the chain is on the cytoplasmic side. A beta stranded membrane pass occupies residues 706 to 714 (FTLGGPYSV). Residues 715-776 (RGYNMGEIGA…VYRRMGQGSS (62 aa)) are Chloroplast intermembrane-facing. The chain crosses the membrane as a beta stranded span at residues 777 to 783 (YGAGMKL). At 784–797 (GLVRAEYAVDHNSG) the chain is on the cytoplasmic side. The beta stranded transmembrane segment at 798–805 (TGAVFFRF) threads the bilayer. Residues 806–809 (GERF) are Chloroplast intermembrane-facing.

This sequence belongs to the TOC75 family. In terms of assembly, part of the TOC core complex that includes a protein for the specific recognition of transit peptides surrounded by a ring composed of four proteins forming translocation channels, and four to five GTP-binding proteins providing energy. This core complex can interact with components of the TIC complex to form a larger import complex. Chloroplastic protein precursors such as prSS (precursor of the RuBisCO small subunit) also interact with these complexes. TOC75 interacts with OEP14, TOC34/OEP34, TOC86/OEP86, TIC55, TIC110/IEP110 and CLPC. Mostly expressed in young leaves, also present in old leaves, roots and stems (at protein level).

The protein localises to the plastid. It localises to the chloroplast outer membrane. In terms of biological role, mediates the insertion of proteins targeted to the outer membrane of chloroplasts. Required for the import of protein precursors into chloroplasts. Forms the voltage-dependent preprotein translocation channels (hydrophilic beta barrel) of the TOC complex in the chloroplastic outer membrane. The narrowest inner diameter of this channel is approximately 14 Angstroms. The protein is Protein TOC75, chloroplastic (TOC75) of Pisum sativum (Garden pea).